A 311-amino-acid chain; its full sequence is tRNA dimethylallyltransferase (311 aa).

12–19 (GPTASGKT) contacts ATP. 14–19 (TASGKT) is a binding site for substrate. 2 interaction with substrate tRNA regions span residues 37 to 40 (DSAM) and 161 to 165 (QRIQR).

This sequence belongs to the IPP transferase family. In terms of assembly, monomer. It depends on Mg(2+) as a cofactor.

The enzyme catalyses adenosine(37) in tRNA + dimethylallyl diphosphate = N(6)-dimethylallyladenosine(37) in tRNA + diphosphate. Catalyzes the transfer of a dimethylallyl group onto the adenine at position 37 in tRNAs that read codons beginning with uridine, leading to the formation of N6-(dimethylallyl)adenosine (i(6)A). The protein is tRNA dimethylallyltransferase of Coxiella burnetii (strain RSA 331 / Henzerling II).